The chain runs to 540 residues: Chaperonin GroEL 1 (540 aa).

Residues 29–32 (TLGP), 86–90 (DGTTT), G413, 478–480 (NAA), and D494 contribute to the ATP site.

It belongs to the chaperonin (HSP60) family. As to quaternary structure, forms a cylinder of 14 subunits composed of two heptameric rings stacked back-to-back. Interacts with the co-chaperonin GroES.

It localises to the cytoplasm. It catalyses the reaction ATP + H2O + a folded polypeptide = ADP + phosphate + an unfolded polypeptide.. Together with its co-chaperonin GroES, plays an essential role in assisting protein folding. The GroEL-GroES system forms a nano-cage that allows encapsulation of the non-native substrate proteins and provides a physical environment optimized to promote and accelerate protein folding. The chain is Chaperonin GroEL 1 from Mycobacterium sp. (strain JLS).